We begin with the raw amino-acid sequence, 339 residues long: Uroporphyrinogen decarboxylase (339 aa).

Residues Arg-21 to Arg-25, Asp-71, Tyr-147, Ser-202, and His-315 contribute to the substrate site.

The protein belongs to the uroporphyrinogen decarboxylase family. As to quaternary structure, homodimer.

Its subcellular location is the cytoplasm. It carries out the reaction uroporphyrinogen III + 4 H(+) = coproporphyrinogen III + 4 CO2. The protein operates within porphyrin-containing compound metabolism; protoporphyrin-IX biosynthesis; coproporphyrinogen-III from 5-aminolevulinate: step 4/4. Its function is as follows. Catalyzes the decarboxylation of four acetate groups of uroporphyrinogen-III to yield coproporphyrinogen-III. This Helicobacter pylori (strain Shi470) protein is Uroporphyrinogen decarboxylase.